Consider the following 623-residue polypeptide: Stretch-activated cation channel MID1 (623 aa).

Topologically, residues 1–57 (MPAREVYLKRPATRRQLEGICTRYDGQQRITQLDCEEGCSKRTQPPQRLNPRYKSPD) are extracellular. A helical transmembrane segment spans residues 58–78 (LIHISFIIVLLCILSMTSSVV). Topologically, residues 79 to 623 (AQTTTGSSSS…DRWGNRWCNG (545 aa)) are cytoplasmic. Positions 524 to 536 (TSTSSGTFPTPST) are enriched in low complexity. The segment at 524–544 (TSTSSGTFPTPSTVLRTPSSP) is disordered. The required for targeting to the cell membrane stretch occupies residues 600 to 623 (SYGDGSAAQGVAAQDRWGNRWCNG).

In terms of assembly, forms an oligomer by disulfide bonds. Interacts with CCH1 to form a Ca(2+) influx channel. Interacts (via C-terminus) with CCP1/cytochrome c peroxidase; the interaction may contribute to cellular detoxification of radicals.

It localises to the cell membrane. Calcium-permeable, cation-selective stretch-activated channel (SAC) that functions together with CCH1 to mediate calcium entry into cells. May additionally play a role in cellular detoxification of radicals. The polypeptide is Stretch-activated cation channel MID1 (Cryptococcus neoformans var. grubii serotype A (strain H99 / ATCC 208821 / CBS 10515 / FGSC 9487) (Filobasidiella neoformans var. grubii)).